Consider the following 512-residue polypeptide: Bifunctional pantoate ligase/cytidylate kinase (512 aa).

The segment at 1-276 (MKLQTSADLQ…CGEARLIDHR (276 aa)) is pantoate--beta-alanine ligase. 27–34 (MGALHQGH) contributes to the ATP binding site. The Proton donor role is filled by His34. A (R)-pantoate-binding site is contributed by Gln58. Gln58 serves as a coordination point for beta-alanine. Position 147-150 (147-150 (GEKD)) interacts with ATP. Gln153 contributes to the (R)-pantoate binding site. ATP is bound by residues Leu176 and 184-187 (LSSR). The cytidylate kinase stretch occupies residues 277–512 (VLMSRLPILA…VPVEALNADA (236 aa)).

In the N-terminal section; belongs to the pantothenate synthetase family. The protein in the C-terminal section; belongs to the cytidylate kinase family. Type 1 subfamily.

It is found in the cytoplasm. It carries out the reaction (R)-pantoate + beta-alanine + ATP = (R)-pantothenate + AMP + diphosphate + H(+). The catalysed reaction is CMP + ATP = CDP + ADP. It catalyses the reaction dCMP + ATP = dCDP + ADP. It participates in cofactor biosynthesis; (R)-pantothenate biosynthesis; (R)-pantothenate from (R)-pantoate and beta-alanine: step 1/1. Catalyzes the condensation of pantoate with beta-alanine in an ATP-dependent reaction via a pantoyl-adenylate intermediate. Functionally, catalyzes the transfer of a phosphate group from ATP to either CMP or dCMP to form CDP or dCDP and ADP, respectively. This is Bifunctional pantoate ligase/cytidylate kinase from Synechococcus sp. (strain RCC307).